Reading from the N-terminus, the 325-residue chain is MQTLAQHLTSKAVNESLAQLILTLADTSKAISHAVRHGALAGVLGATEQENVQGETQKKLDIITNDMLKDALKADGTVRGLASEEEDHVVEVSANGQYLVCFDPLDGSSNIDINSLVGTIFSVLPAPQGELTEASFLQSGRNQLAAGYVLYGPSTMLALTTGQGVQLFTLHPETNEFLLTNATMSISPDTSEFAINMSNQRFWEAPMQTYIADLLLGKIGPREKSFNMRWIAAMVGDVHRVLSRGGIFTYPTDNKDPKKPYKLRLMYEANPMAFLVEQAGGKASTGYETILDIQPTQIHQRVAVILGSANEVDACLSYHGIDSRK.

Glu84, Asp103, Leu105, and Asp106 together coordinate Mg(2+). Residues 106-109 (DGSS), Asn196, and Lys262 contribute to the substrate site. A Mg(2+)-binding site is contributed by Glu268.

Belongs to the FBPase class 1 family. Homotetramer. Mg(2+) serves as cofactor.

Its subcellular location is the cytoplasm. It carries out the reaction beta-D-fructose 1,6-bisphosphate + H2O = beta-D-fructose 6-phosphate + phosphate. Its pathway is carbohydrate biosynthesis; gluconeogenesis. This is Fructose-1,6-bisphosphatase class 1 from Shewanella oneidensis (strain ATCC 700550 / JCM 31522 / CIP 106686 / LMG 19005 / NCIMB 14063 / MR-1).